Here is a 557-residue protein sequence, read N- to C-terminus: Probable protein kinase UbiB (557 aa).

Residues 121-509 (SFDTVPLASA…RKLQTRVVTA (389 aa)) enclose the Protein kinase domain. ATP contacts are provided by residues 127–135 (LASASIAQV) and lysine 154. Catalysis depends on aspartate 289, which acts as the Proton acceptor. Transmembrane regions (helical) follow at residues 506–526 (VVTAITGSGLLVVAAVLYGLH) and 535–555 (VPVWSWISGGAGSAALLVAWL).

It belongs to the ABC1 family. UbiB subfamily.

The protein localises to the cell inner membrane. It functions in the pathway cofactor biosynthesis; ubiquinone biosynthesis [regulation]. In terms of biological role, is probably a protein kinase regulator of UbiI activity which is involved in aerobic coenzyme Q (ubiquinone) biosynthesis. The polypeptide is Probable protein kinase UbiB (Xanthomonas axonopodis pv. citri (strain 306)).